The sequence spans 882 residues: Valine--tRNA ligase (882 aa).

The 'HIGH' region motif lies at 45 to 55; it reads PNVTGKLHLGH. The short motif at 519-523 is the 'KMSKS' region element; the sequence is KMSKS. ATP is bound at residue Lys-522. Positions 808 to 882 form a coiled coil; that stretch reads LADLLNVEEE…RIAEMQKLVK (75 aa).

Belongs to the class-I aminoacyl-tRNA synthetase family. ValS type 1 subfamily. In terms of assembly, monomer.

It localises to the cytoplasm. The enzyme catalyses tRNA(Val) + L-valine + ATP = L-valyl-tRNA(Val) + AMP + diphosphate. Functionally, catalyzes the attachment of valine to tRNA(Val). As ValRS can inadvertently accommodate and process structurally similar amino acids such as threonine, to avoid such errors, it has a 'posttransfer' editing activity that hydrolyzes mischarged Thr-tRNA(Val) in a tRNA-dependent manner. In Streptococcus pyogenes serotype M3 (strain ATCC BAA-595 / MGAS315), this protein is Valine--tRNA ligase.